A 217-amino-acid polypeptide reads, in one-letter code: GTP cyclohydrolase 1 (217 aa).

Zn(2+)-binding residues include cysteine 109, histidine 112, and cysteine 180.

This sequence belongs to the GTP cyclohydrolase I family. In terms of assembly, toroid-shaped homodecamer, composed of two pentamers of five dimers.

It carries out the reaction GTP + H2O = 7,8-dihydroneopterin 3'-triphosphate + formate + H(+). It participates in cofactor biosynthesis; 7,8-dihydroneopterin triphosphate biosynthesis; 7,8-dihydroneopterin triphosphate from GTP: step 1/1. This chain is GTP cyclohydrolase 1, found in Aliivibrio fischeri (strain ATCC 700601 / ES114) (Vibrio fischeri).